The primary structure comprises 317 residues: Large ribosomal subunit protein uL10 (317 aa).

Residues 286 to 317 (AGAGAAAEKKEEAKKEESESEEDDDMGFGLFD) are disordered. Basic and acidic residues predominate over residues 292 to 302 (AEKKEEAKKEE).

This sequence belongs to the universal ribosomal protein uL10 family. In terms of assembly, P0 forms a pentameric complex by interaction with dimers of P1 and P2. In terms of processing, phosphorylated.

Ribosomal protein P0 is the functional equivalent of E.coli protein L10. This is Large ribosomal subunit protein uL10 (RpLP0) from Ceratitis capitata (Mediterranean fruit fly).